The following is a 503-amino-acid chain: Glutamate--tRNA ligase (503 aa).

The 'HIGH' region motif lies at 9 to 19; the sequence is PSPTGDPHVGT. The 'KMSKS' region motif lies at 251–255; sequence KLSKR. Residue K254 participates in ATP binding.

It belongs to the class-I aminoacyl-tRNA synthetase family. Glutamate--tRNA ligase type 1 subfamily. Monomer.

It is found in the cytoplasm. The catalysed reaction is tRNA(Glu) + L-glutamate + ATP = L-glutamyl-tRNA(Glu) + AMP + diphosphate. Its function is as follows. Catalyzes the attachment of glutamate to tRNA(Glu) in a two-step reaction: glutamate is first activated by ATP to form Glu-AMP and then transferred to the acceptor end of tRNA(Glu). This chain is Glutamate--tRNA ligase, found in Saccharophagus degradans (strain 2-40 / ATCC 43961 / DSM 17024).